The chain runs to 50 residues: Conotoxin Cal6.19 (50 aa).

The signal sequence occupies residues 1-22 (MKVTCVLVLTLMALTVCQVATA). 3 cysteine pairs are disulfide-bonded: C24/C37, C30/C41, and C36/C46.

Expressed by the venom duct.

It localises to the secreted. Its function is as follows. Probable neurotoxin. The sequence is that of Conotoxin Cal6.19 from Californiconus californicus (California cone).